Consider the following 346-residue polypeptide: Elongation factor Ts (346 aa).

The involved in Mg(2+) ion dislocation from EF-Tu stretch occupies residues 80–83 (TDFV).

This sequence belongs to the EF-Ts family.

Its subcellular location is the cytoplasm. In terms of biological role, associates with the EF-Tu.GDP complex and induces the exchange of GDP to GTP. It remains bound to the aminoacyl-tRNA.EF-Tu.GTP complex up to the GTP hydrolysis stage on the ribosome. The sequence is that of Elongation factor Ts from Streptococcus pyogenes serotype M1.